The primary structure comprises 240 residues: Small ribosomal subunit protein uS2c (240 aa).

This sequence belongs to the universal ribosomal protein uS2 family.

Its subcellular location is the plastid. The protein localises to the chloroplast. The protein is Small ribosomal subunit protein uS2c (rps2) of Cycas taitungensis (Prince sago).